Reading from the N-terminus, the 338-residue chain is MEEINKKDTFIEPILKENKDRFVLFPIKYPDIWRMYKKALASHWVAEEIDLGNDNVDWEYKLTDNERHFISHVLAFFAASDGIVNENLATRFMSEVQIPEARCFYGFQIAIENIHSETYSLLIETYIKDKQTKDKLFNAIETIPCIKKKAEWALRWINDSDSFAERLVAFAAVEGIFFSGSFCSIFWLKKRGLMQGLTFSNELISRDEGLHCDFACLLYTKLQRKLDPKVIEKMIRDAVECEKEFICESLPVDLIGMNSRSMSQYIEFCADRLVVSLGYKKIFNSSNPFEWMEMISLQRKSNFFEGKVAEYAKTGVAIQGNNQQKNNQSRTLVLDEDF.

Asp81, Glu112, and His115 together coordinate Fe cation. Tyr119 is an active-site residue. Fe cation is bound by residues Glu174, Glu208, and His211.

It belongs to the ribonucleoside diphosphate reductase small chain family. In terms of assembly, heterodimer of a large and a small subunit. It depends on Fe cation as a cofactor.

The protein localises to the cytoplasm. The enzyme catalyses a 2'-deoxyribonucleoside 5'-diphosphate + [thioredoxin]-disulfide + H2O = a ribonucleoside 5'-diphosphate + [thioredoxin]-dithiol. Provides the precursors necessary for DNA synthesis. Catalyzes the biosynthesis of deoxyribonucleotides from the corresponding ribonucleotides. This chain is Ribonucleoside-diphosphate reductase small subunit (rnrB-1), found in Dictyostelium discoideum (Social amoeba).